The chain runs to 219 residues: Orotate phosphoribosyltransferase (219 aa).

Lys26 contacts 5-phospho-alpha-D-ribose 1-diphosphate. 34–35 (FF) contacts orotate. Residues 72–73 (YK), Arg98, Lys99, Lys102, His104, and 124–132 (DDVITAGTA) each bind 5-phospho-alpha-D-ribose 1-diphosphate. The orotate site is built by Thr128 and Arg156.

This sequence belongs to the purine/pyrimidine phosphoribosyltransferase family. PyrE subfamily. In terms of assembly, homodimer. The cofactor is Mg(2+).

It carries out the reaction orotidine 5'-phosphate + diphosphate = orotate + 5-phospho-alpha-D-ribose 1-diphosphate. The protein operates within pyrimidine metabolism; UMP biosynthesis via de novo pathway; UMP from orotate: step 1/2. Its function is as follows. Catalyzes the transfer of a ribosyl phosphate group from 5-phosphoribose 1-diphosphate to orotate, leading to the formation of orotidine monophosphate (OMP). The chain is Orotate phosphoribosyltransferase from Xylella fastidiosa (strain 9a5c).